The following is a 289-amino-acid chain: Rhodopsin (289 aa).

The Extracellular portion of the chain corresponds to 1–7; sequence YLVNPAG. The helical transmembrane segment at 8–32 threads the bilayer; sequence YAALGAYMFLLILIGFPVNFLTLYV. At 33-44 the chain is on the cytoplasmic side; it reads TLEHKKLRTPLN. A helical membrane pass occupies residues 45–67; it reads YILLNLAVADLFMVLGGFTTTMY. At 68 to 81 the chain is on the extracellular side; that stretch reads TSMHGYFVLGRLGC. A disulfide bridge connects residues cysteine 81 and cysteine 158. The helical transmembrane segment at 82–104 threads the bilayer; sequence NLEGFFATLGGEIALWSLVVLAI. Residues 105-107 carry the 'Ionic lock' involved in activated form stabilization motif; the sequence is ERW. Residues 105–123 lie on the Cytoplasmic side of the membrane; it reads ERWIVGLKPIRNFRFTEDH. The chain crosses the membrane as a helical span at residues 124–144; sequence AIMGLAFSWVMALSCAVPPLA. At 145-173 the chain is on the extracellular side; sequence GWLRYIPEGIQGSCGVDYYTRAEGFNNES. Residue asparagine 171 is glycosylated (N-linked (GlcNAc...) asparagine). A helical membrane pass occupies residues 174–195; the sequence is FVIYMFTVHFLIPLSVIFFCYG. Residues 196-223 are Cytoplasmic-facing; the sequence is RLLCAVKEAAAAQQESETTQRAEKEVSR. Residues 224–245 form a helical membrane-spanning segment; it reads MVVIMVIGFLVCWLPYASVAWW. Over 246–257 the chain is Extracellular; that stretch reads IFCNQGSDFGPI. Residues 258–279 form a helical membrane-spanning segment; sequence FMTLPSFFAKRPAIYNPMIYIC. Lysine 267 is modified (N6-(retinylidene)lysine). Residues 280–289 are Cytoplasmic-facing; that stretch reads MNKQFRHCMI.

This sequence belongs to the G-protein coupled receptor 1 family. Opsin subfamily. Post-translationally, phosphorylated on some or all of the serine and threonine residues present in the C-terminal region. Contains one covalently linked retinal chromophore.

The protein localises to the membrane. It localises to the cell projection. Its subcellular location is the cilium. It is found in the photoreceptor outer segment. Functionally, photoreceptor required for image-forming vision at low light intensity. While most salt water fish species use retinal as chromophore, most freshwater fish use 3-dehydroretinal, or a mixture of retinal and 3-dehydroretinal. Light-induced isomerization of 11-cis to all-trans retinal triggers a conformational change that activates signaling via G-proteins. Subsequent receptor phosphorylation mediates displacement of the bound G-protein alpha subunit by arrestin and terminates signaling. The sequence is that of Rhodopsin (rho) from Limnocottus pallidus (Ray-finned fish).